Consider the following 128-residue polypeptide: Large ribosomal subunit protein bL17 (128 aa).

This sequence belongs to the bacterial ribosomal protein bL17 family. Part of the 50S ribosomal subunit. Contacts protein L32.

This is Large ribosomal subunit protein bL17 from Streptococcus uberis (strain ATCC BAA-854 / 0140J).